The chain runs to 234 residues: Putative N-acetylmannosamine-6-phosphate 2-epimerase (234 aa).

This sequence belongs to the NanE family.

The enzyme catalyses an N-acyl-D-glucosamine 6-phosphate = an N-acyl-D-mannosamine 6-phosphate. The protein operates within amino-sugar metabolism; N-acetylneuraminate degradation; D-fructose 6-phosphate from N-acetylneuraminate: step 3/5. In terms of biological role, converts N-acetylmannosamine-6-phosphate (ManNAc-6-P) to N-acetylglucosamine-6-phosphate (GlcNAc-6-P). This is Putative N-acetylmannosamine-6-phosphate 2-epimerase from Klebsiella pneumoniae subsp. pneumoniae (strain ATCC 700721 / MGH 78578).